A 418-amino-acid chain; its full sequence is Glutamyl-tRNA reductase (418 aa).

Substrate contacts are provided by residues 49–52 (TCNR), Ser108, 113–115 (EPQ), and Gln119. The Nucleophile role is filled by Cys50. 188–193 (GAGETI) is a binding site for NADP(+).

The protein belongs to the glutamyl-tRNA reductase family. Homodimer.

The enzyme catalyses (S)-4-amino-5-oxopentanoate + tRNA(Glu) + NADP(+) = L-glutamyl-tRNA(Glu) + NADPH + H(+). The protein operates within porphyrin-containing compound metabolism; protoporphyrin-IX biosynthesis; 5-aminolevulinate from L-glutamyl-tRNA(Glu): step 1/2. Catalyzes the NADPH-dependent reduction of glutamyl-tRNA(Glu) to glutamate 1-semialdehyde (GSA). The chain is Glutamyl-tRNA reductase from Aliivibrio salmonicida (strain LFI1238) (Vibrio salmonicida (strain LFI1238)).